We begin with the raw amino-acid sequence, 27 residues long: thr operon leader peptide (27 aa).

It belongs to the thr operon leader peptide family.

Functionally, this protein is involved in control of the biosynthesis of threonine. In Escherichia coli O157:H7, this protein is thr operon leader peptide.